We begin with the raw amino-acid sequence, 500 residues long: Prostacyclin synthase (500 aa).

Residues 1 to 20 (MAWAALLGLLAALLLLLLLS) traverse the membrane as a helical segment. Residues arginine 106, leucine 112, asparagine 287, 358 to 359 (TR), and arginine 382 contribute to the substrate site. Residue cysteine 441 participates in heme binding.

Belongs to the cytochrome P450 family. Requires heme as cofactor. In terms of tissue distribution, widely expressed; particularly abundant in ovary, heart, skeletal muscle, lung and prostate.

The protein localises to the endoplasmic reticulum membrane. It catalyses the reaction prostaglandin H2 = prostaglandin I2. The catalysed reaction is a hydroperoxyeicosatetraenoate = an oxoeicosatetraenoate + H2O. The enzyme catalyses (15S)-hydroperoxy-(5Z,8Z,11Z,13E)-eicosatetraenoate = 15-oxo-(5Z,8Z,11Z,13E)-eicosatetraenoate + H2O. It carries out the reaction (15S)-hydroperoxy-(5Z,8Z,11Z,13E)-eicosatetraenoate + AH2 = (15S)-hydroxy-(5Z,8Z,11Z,13E)-eicosatetraenoate + A + H2O. Catalyzes the biosynthesis and metabolism of eicosanoids. Catalyzes the isomerization of prostaglandin H2 to prostacyclin (= prostaglandin I2), a potent mediator of vasodilation and inhibitor of platelet aggregation. Additionally, displays dehydratase activity, toward hydroperoxyeicosatetraenoates (HPETEs), especially toward (15S)-hydroperoxy-(5Z,8Z,11Z,13E)-eicosatetraenoate (15(S)-HPETE). This Homo sapiens (Human) protein is Prostacyclin synthase (PTGIS).